The chain runs to 634 residues: Probable potassium transport system protein Kup (634 aa).

Transmembrane regions (helical) follow at residues 21–41 (IILS…LYTL), 58–78 (VLGI…IKYV), 110–130 (IYIV…DGII), 148–168 (PHMK…LFLC), 180–200 (FGPI…YNII), 217–237 (FFLE…LAVT), 258–278 (WMYV…ALVL), 296–316 (GLYP…QALI), 348–368 (IYVP…VIGF), 377–397 (AYGV…IIYA), 408–428 (LLMI…ANII), and 432–452 (DGAW…RTWL).

This sequence belongs to the HAK/KUP transporter (TC 2.A.72) family.

The protein localises to the cell inner membrane. The catalysed reaction is K(+)(in) + H(+)(in) = K(+)(out) + H(+)(out). Its function is as follows. Transport of potassium into the cell. Likely operates as a K(+):H(+) symporter. The polypeptide is Probable potassium transport system protein Kup (Xylella fastidiosa (strain Temecula1 / ATCC 700964)).